The following is a 352-amino-acid chain: S-adenosylmethionine:tRNA ribosyltransferase-isomerase (352 aa).

Belongs to the QueA family. As to quaternary structure, monomer.

It is found in the cytoplasm. It catalyses the reaction 7-aminomethyl-7-carbaguanosine(34) in tRNA + S-adenosyl-L-methionine = epoxyqueuosine(34) in tRNA + adenine + L-methionine + 2 H(+). It functions in the pathway tRNA modification; tRNA-queuosine biosynthesis. Functionally, transfers and isomerizes the ribose moiety from AdoMet to the 7-aminomethyl group of 7-deazaguanine (preQ1-tRNA) to give epoxyqueuosine (oQ-tRNA). The polypeptide is S-adenosylmethionine:tRNA ribosyltransferase-isomerase (Gloeobacter violaceus (strain ATCC 29082 / PCC 7421)).